The primary structure comprises 86 residues: Anti-adapter protein IraP (86 aa).

Residues 1-36 adopt a coiled-coil conformation; the sequence is MKNLIAELLLKLAQKEEESKELCAQVEALEIIVTAM.

The protein belongs to the IraP family. In terms of assembly, interacts with RssB.

Its subcellular location is the cytoplasm. Functionally, inhibits RpoS proteolysis by regulating RssB activity, thereby increasing the stability of the sigma stress factor RpoS especially during phosphate starvation, but also in stationary phase and during nitrogen starvation. Its effect on RpoS stability is due to its interaction with RssB, which probably blocks the interaction of RssB with RpoS, and the consequent delivery of the RssB-RpoS complex to the ClpXP protein degradation pathway. In Shigella boydii serotype 4 (strain Sb227), this protein is Anti-adapter protein IraP.